Here is a 285-residue protein sequence, read N- to C-terminus: Transmembrane protein 158 (285 aa).

Positions 1–20 are cleaved as a signal peptide; sequence MLPLLAALLAAACPLPPARG. Residues 20-43 are disordered; that stretch reads GGATDAPGLSGTPPNASANASFTG. The segment covering 31–43 has biased composition (polar residues); sequence TPPNASANASFTG. An N-linked (GlcNAc...) asparagine glycan is attached at N73. 2 consecutive transmembrane segments (helical) span residues 215–235 and 263–283; these read LVIV…IAGF and AAAA…SGVA.

It belongs to the TMEM158 family. N-glycosylated. As to expression, detected only in the brain.

The protein resides in the membrane. Receptor for brain injury-derived neurotrophic peptide (BINP), a synthetic 13-mer peptide. This Rattus norvegicus (Rat) protein is Transmembrane protein 158 (Tmem158).